Consider the following 174-residue polypeptide: uncharacterized protein (174 aa).

This sequence to E.coli HemX C-terminal region.

This is an uncharacterized protein from Haemophilus influenzae (strain ATCC 51907 / DSM 11121 / KW20 / Rd).